The sequence spans 241 residues: Proteasome subunit beta type-1 (241 aa).

Position 1 is an N-acetylmethionine (Met-1). Residues 1-28 (MLSSTAMYSAPGRDLGMEPHRAAGPLQL) constitute a propeptide that is removed on maturation. Ser-58 is a glycosylation site (O-linked (GlcNAc) serine). 2 positions are modified to phosphoserine: Ser-62 and Ser-68. The residue at position 150 (Tyr-150) is a Phosphotyrosine. Ser-162 carries the phosphoserine modification. At Lys-204 the chain carries N6-acetyllysine. The O-linked (GlcNAc) serine glycan is linked to Ser-209.

Belongs to the peptidase T1B family. The 26S proteasome consists of a 20S proteasome core and two 19S regulatory subunits. The 20S proteasome core is a barrel-shaped complex made of 28 subunits that are arranged in four stacked rings. The two outer rings are each formed by seven alpha subunits, and the two inner rings are formed by seven beta subunits. The proteolytic activity is exerted by three beta-subunits PSMB5, PSMB6 and PSMB7. Interacts with SERPINB2. Interacts with RFPL4A. In terms of assembly, (Microbial infection) Interacts with HIV-1 protein Tat.

It is found in the cytoplasm. Its subcellular location is the nucleus. Non-catalytic component of the 20S core proteasome complex involved in the proteolytic degradation of most intracellular proteins. This complex plays numerous essential roles within the cell by associating with different regulatory particles. Associated with two 19S regulatory particles, forms the 26S proteasome and thus participates in the ATP-dependent degradation of ubiquitinated proteins. The 26S proteasome plays a key role in the maintenance of protein homeostasis by removing misfolded or damaged proteins that could impair cellular functions, and by removing proteins whose functions are no longer required. Associated with the PA200 or PA28, the 20S proteasome mediates ubiquitin-independent protein degradation. This type of proteolysis is required in several pathways including spermatogenesis (20S-PA200 complex) or generation of a subset of MHC class I-presented antigenic peptides (20S-PA28 complex). The chain is Proteasome subunit beta type-1 from Homo sapiens (Human).